Here is a 732-residue protein sequence, read N- to C-terminus: Conidiogenone synthase (732 aa).

Residues 1 to 311 are terpene cyclase; the sequence is MADKITDEYA…SLCVPRYCKV (311 aa). Position 97 (Asp-97) interacts with Mg(2+). Residues Asp-97, 169-172, Asn-213, 217-221, and 307-308 contribute to the substrate site; these read RIVD, SWDKE, and RY. Positions 97 to 101 match the DDXXD 1 motif; that stretch reads DALNQ. The NSE/DTE motif lies at 213-221; it reads NDLFSWDKE. The prenyltransferase stretch occupies residues 312–732; the sequence is DRNPYKDHLE…LRAMEETLQK (421 aa). The disordered stretch occupies residues 348–370; sequence KQSELKDPSSSTYKSHFSPLEPN. Residues Lys-402, Arg-405, and His-434 each coordinate isopentenyl diphosphate. Mg(2+)-binding residues include Asp-441 and Asp-445. The DDXXD 2 motif lies at 441–445; sequence DDIQD. Dimethylallyl diphosphate is bound at residue Arg-450. Isopentenyl diphosphate is bound at residue Arg-451. 6 residues coordinate dimethylallyl diphosphate: Lys-529, Thr-530, Gln-565, Asn-572, Lys-582, and Lys-592.

This sequence in the N-terminal section; belongs to the terpene synthase family. In the C-terminal section; belongs to the FPP/GGPP synthase family. Hexamer. The cofactor is Mg(2+).

It catalyses the reaction isopentenyl diphosphate + (2E,6E)-farnesyl diphosphate = (2E,6E,10E)-geranylgeranyl diphosphate + diphosphate. The protein operates within secondary metabolite biosynthesis; terpenoid biosynthesis. Its function is as follows. Bifunctional terpene synthase; part of the gene cluster that mediates the biosynthesis of conidiogenone, a diterpene known to induce the conidiation. The bifunctional terpene synthase PchDS converts isopentenyl diphosphate (IPP) and dimethylallyl diphosphate (DMAPP) into deoxyconidiogenol. The C-terminal prenyltransferase (PT) domain of PchDS catalyzes formation of GGPP, whereas the N-terminal terpene cyclase (TC) domain catalyzes the cyclization of GGPP into deoxyconidiogenol. The cytochrome P450 monooxygenase PchP450 then catalyzes two rounds of oxidation to furnish conidiogenone. This Penicillium rubens (strain ATCC 28089 / DSM 1075 / NRRL 1951 / Wisconsin 54-1255) (Penicillium chrysogenum) protein is Conidiogenone synthase.